The primary structure comprises 331 residues: Doxorubicin resistance ATP-binding protein DrrA (331 aa).

Residues 8-240 (VVVNGVRKTY…AGDTFCEIVP (233 aa)) form the ABC transporter domain. An ATP-binding site is contributed by 42 to 49 (GPNGAGKT).

Belongs to the ABC transporter superfamily. Drug exporter-1 (DrugE1) (TC 3.A.1.105) family. In terms of assembly, the complex is composed of two ATP-binding proteins (DrrA) and two transmembrane proteins (DrrB and DrrC).

Its subcellular location is the cell membrane. Its function is as follows. Part of the ABC transporter complex DrrABC involved in doxorubicin resistance. Responsible for energy coupling to the transport system. Binds ATP. The protein is Doxorubicin resistance ATP-binding protein DrrA (drrA) of Mycobacterium tuberculosis (strain CDC 1551 / Oshkosh).